The sequence spans 319 residues: Ribonuclease Z (319 aa).

Zn(2+) is bound by residues His62, His64, Asp66, His67, His139, Asp210, and His268. Asp66 serves as the catalytic Proton acceptor.

Belongs to the RNase Z family. In terms of assembly, homodimer. Zn(2+) is required as a cofactor.

It catalyses the reaction Endonucleolytic cleavage of RNA, removing extra 3' nucleotides from tRNA precursor, generating 3' termini of tRNAs. A 3'-hydroxy group is left at the tRNA terminus and a 5'-phosphoryl group is left at the trailer molecule.. Its function is as follows. Zinc phosphodiesterase, which displays some tRNA 3'-processing endonuclease activity. Probably involved in tRNA maturation, by removing a 3'-trailer from precursor tRNA. The sequence is that of Ribonuclease Z from Nostoc punctiforme (strain ATCC 29133 / PCC 73102).